Consider the following 104-residue polypeptide: Large ribosomal subunit protein bL21 (104 aa).

It belongs to the bacterial ribosomal protein bL21 family. Part of the 50S ribosomal subunit. Contacts protein L20.

Its function is as follows. This protein binds to 23S rRNA in the presence of protein L20. This Caldanaerobacter subterraneus subsp. tengcongensis (strain DSM 15242 / JCM 11007 / NBRC 100824 / MB4) (Thermoanaerobacter tengcongensis) protein is Large ribosomal subunit protein bL21.